We begin with the raw amino-acid sequence, 417 residues long: Succinate--CoA ligase [ADP-forming] subunit beta, mitochondrial (417 aa).

Residues 1 to 24 (MLRKLANQSLSVAGKWQQQQLRRL) constitute a mitochondrion transit peptide. Residues 32-275 (AELMSKYGIN…SSQEDPREVA (244 aa)) enclose the ATP-grasp domain. Residues lysine 71, 78–80 (GRG), and glutamate 138 contribute to the ATP site. Positions 230 and 244 each coordinate Mg(2+). Substrate-binding positions include asparagine 295 and 352-354 (GIM).

The protein belongs to the succinate/malate CoA ligase beta subunit family. Heterodimer of an alpha and a beta subunit. Requires Mg(2+) as cofactor. Expressed in roots, stems, flowers, leaves and fruits.

The protein localises to the mitochondrion. The enzyme catalyses succinate + ATP + CoA = succinyl-CoA + ADP + phosphate. Its pathway is carbohydrate metabolism; tricarboxylic acid cycle; succinate from succinyl-CoA (ligase route): step 1/1. In terms of biological role, succinyl-CoA synthetase functions in the citric acid cycle (TCA), coupling the hydrolysis of succinyl-CoA to the synthesis of ATP and thus represents the only step of substrate-level phosphorylation in the TCA. The beta subunit provides nucleotide specificity of the enzyme and binds the substrate succinate, while the binding sites for coenzyme A and phosphate are found in the alpha subunit. The polypeptide is Succinate--CoA ligase [ADP-forming] subunit beta, mitochondrial (Solanum lycopersicum (Tomato)).